Reading from the N-terminus, the 708-residue chain is Ubiquitin thioesterase ZRANB1 (708 aa).

Residues glutamate 3–serine 33 form a RanBP2-type 1 zinc finger. Zn(2+) is bound by residues cysteine 10, cysteine 13, cysteine 24, and cysteine 27. Positions threonine 38–arginine 73 are disordered. 2 RanBP2-type zinc fingers span residues asparagine 84–threonine 113 and arginine 149–asparagine 178. Zn(2+) is bound by residues cysteine 90, cysteine 93, cysteine 104, cysteine 107, cysteine 155, cysteine 158, cysteine 169, and cysteine 172. The tract at residues arginine 200 to aspartate 223 is disordered. The span at serine 206–serine 216 shows a compositional bias: polar residues. ANK repeat units lie at residues lysine 260–aspartate 290 and tyrosine 313–alanine 340. In terms of domain architecture, OTU spans leucine 432–methionine 592. The active-site Nucleophile is cysteine 443. The active-site Proton acceptor is histidine 585.

This sequence belongs to the peptidase C64 family. Interacts with TRAF6. Interacts with APC.

Its subcellular location is the cytoplasm. It localises to the nucleus. It carries out the reaction Thiol-dependent hydrolysis of ester, thioester, amide, peptide and isopeptide bonds formed by the C-terminal Gly of ubiquitin (a 76-residue protein attached to proteins as an intracellular targeting signal).. Functionally, ubiquitin thioesterase, which specifically hydrolyzes 'Lys-29'-linked and 'Lys-33'-linked diubiquitin. Also cleaves 'Lys-63'-linked chains, but with 40-fold less efficiency compared to 'Lys-29'-linked ones. Positive regulator of the Wnt signaling pathway that deubiquitinates APC protein, a negative regulator of Wnt-mediated transcription. Acts as a regulator of autophagy by mediating deubiquitination of PIK3C3/VPS34, thereby promoting autophagosome maturation. Plays a role in the regulation of cell morphology and cytoskeletal organization. Required in the stress fiber dynamics and cell migration. The chain is Ubiquitin thioesterase ZRANB1 from Bos taurus (Bovine).